A 20-amino-acid chain; its full sequence is Short cationic peptide-4a (20 aa).

E20 is modified (glutamic acid 1-amide).

In terms of tissue distribution, expressed by the venom gland.

The protein localises to the secreted. This Cupiennius salei (American wandering spider) protein is Short cationic peptide-4a.